Consider the following 413-residue polypeptide: NAD(P)H oxidoreductase RTN4IP1, mitochondrial (413 aa).

Residues 1–23 constitute a mitochondrion transit peptide; it reads MTAAGFNSILCLRQLVRLNRRQY. The segment at 27 to 52 is disordered; the sequence is AKSVLSGSQTNDQATPPPTSKSADKM. Positions 31–40 are enriched in polar residues; that stretch reads LSGSQTNDQA. The Enoyl reductase (ER) domain occupies 61–405; it reads GDIDELQLSE…SGHLRGKIVV (345 aa). 9 residues coordinate NADPH: Ser-228, Gly-230, Val-231, Ser-251, Tyr-269, Gly-353, Phe-355, His-398, and Arg-400.

It belongs to the zinc-containing alcohol dehydrogenase family. Quinone oxidoreductase subfamily.

The protein resides in the mitochondrion matrix. It carries out the reaction a quinone + NADH + H(+) = a quinol + NAD(+). It catalyses the reaction a quinone + NADPH + H(+) = a quinol + NADP(+). Its pathway is cofactor biosynthesis; ubiquinone biosynthesis. Functionally, NAD(P)H oxidoreductase. Involved in the ubiquinone biosynthetic pathway. The sequence is that of NAD(P)H oxidoreductase RTN4IP1, mitochondrial from Drosophila melanogaster (Fruit fly).